We begin with the raw amino-acid sequence, 282 residues long: uncharacterized protein (282 aa).

The HTH rpiR-type domain occupies 2–78 (TDVLAVIREM…IKIAVSLAKQ (77 aa)). A DNA-binding region (H-T-H motif) is located at residues 38-57 (VNELANACDTSEASIIRFCR). The SIS domain maps to 122–262 (AAEALANANK…FILVAQKKYN (141 aa)).

This is an uncharacterized protein from Caldanaerobacter subterraneus subsp. tengcongensis (strain DSM 15242 / JCM 11007 / NBRC 100824 / MB4) (Thermoanaerobacter tengcongensis).